The primary structure comprises 295 residues: Fructose-bisphosphate aldolase class 1 (295 aa).

The active-site Proton acceptor is the E176. Residue K213 is the Schiff-base intermediate with dihydroxyacetone-P of the active site.

Belongs to the class I fructose-bisphosphate aldolase family.

It catalyses the reaction beta-D-fructose 1,6-bisphosphate = D-glyceraldehyde 3-phosphate + dihydroxyacetone phosphate. Its pathway is carbohydrate degradation; glycolysis; D-glyceraldehyde 3-phosphate and glycerone phosphate from D-glucose: step 4/4. The chain is Fructose-bisphosphate aldolase class 1 from Treponema denticola (strain ATCC 35405 / DSM 14222 / CIP 103919 / JCM 8153 / KCTC 15104).